The chain runs to 395 residues: Altered inheritance of mitochondria protein 39, mitochondrial (395 aa).

A helical membrane pass occupies residues 156–176 (QIWSAIFGGIFGVILGYSLIY).

The protein belongs to the AIM39 family.

It is found in the mitochondrion membrane. The protein is Altered inheritance of mitochondria protein 39, mitochondrial (AIM39) of Saccharomyces cerevisiae (strain ATCC 204508 / S288c) (Baker's yeast).